Here is a 60-residue protein sequence, read N- to C-terminus: Large ribosomal subunit protein uL30 (60 aa).

The protein belongs to the universal ribosomal protein uL30 family. As to quaternary structure, part of the 50S ribosomal subunit.

The protein is Large ribosomal subunit protein uL30 of Flavobacterium psychrophilum (strain ATCC 49511 / DSM 21280 / CIP 103535 / JIP02/86).